Reading from the N-terminus, the 412-residue chain is Solute carrier family 22 member 18 (412 aa).

The next 10 helical transmembrane spans lie at 16–36, 51–71, 117–137, 148–168, 176–196, 232–252, 264–284, 294–314, 316–336, and 380–400; these read GIIILTYVLAALELTCLFMQF, VSFGYLQTTFGVLQLLGGPVF, LPAALMHTLPAAQMVITDLTA, LGLCFGIGVIFGSLLGGTLST, AFLAFVVTLLGAVLSFTCIPV, FLVKVISGFPSGLFMVMFSII, AGYLMSFFGILQMMIQGLVIG, ALLRSSVLVFAVVGLGMALMS, VFHFCLLLPGLVFSLCALNIV, and GVSILGHVQLMVNLLVLLVLW.

Belongs to the major facilitator (TC 2.A.1) superfamily. Organic cation transporter (TC 2.A.1.19) family.

It localises to the apical cell membrane. May act as a transporter of organic cations based on a proton efflux antiport mechanism. May play a role in the transport of chloroquine and quinidine-related compounds in kidney. Plays a role in the regulation of lipid metabolism. This is Solute carrier family 22 member 18 (Slc67a1) from Rattus norvegicus (Rat).